The sequence spans 166 residues: ATP synthase subunit b (166 aa).

A helical membrane pass occupies residues 15–37 (TLYYLLIFAALLLLVKHFAWGPV).

It belongs to the ATPase B chain family. F-type ATPases have 2 components, F(1) - the catalytic core - and F(0) - the membrane proton channel. F(1) has five subunits: alpha(3), beta(3), gamma(1), delta(1), epsilon(1). F(0) has three main subunits: a(1), b(2) and c(10-14). The alpha and beta chains form an alternating ring which encloses part of the gamma chain. F(1) is attached to F(0) by a central stalk formed by the gamma and epsilon chains, while a peripheral stalk is formed by the delta and b chains.

It localises to the cell membrane. F(1)F(0) ATP synthase produces ATP from ADP in the presence of a proton or sodium gradient. F-type ATPases consist of two structural domains, F(1) containing the extramembraneous catalytic core and F(0) containing the membrane proton channel, linked together by a central stalk and a peripheral stalk. During catalysis, ATP synthesis in the catalytic domain of F(1) is coupled via a rotary mechanism of the central stalk subunits to proton translocation. Its function is as follows. Component of the F(0) channel, it forms part of the peripheral stalk, linking F(1) to F(0). This Lactobacillus johnsonii (strain CNCM I-12250 / La1 / NCC 533) protein is ATP synthase subunit b.